A 344-amino-acid polypeptide reads, in one-letter code: Tryptophan--tRNA ligase (344 aa).

Residues 20–22 (QPS) and 28–29 (GN) contribute to the ATP site. A 'HIGH' region motif is present at residues 21 to 29 (PSGALHLGN). Asp-144 contributes to the L-tryptophan binding site. ATP-binding positions include 156 to 158 (GED), Val-197, and 206 to 210 (KMSKS). Positions 206–210 (KMSKS) match the 'KMSKS' region motif.

Belongs to the class-I aminoacyl-tRNA synthetase family. In terms of assembly, homodimer.

The protein localises to the cytoplasm. The enzyme catalyses tRNA(Trp) + L-tryptophan + ATP = L-tryptophyl-tRNA(Trp) + AMP + diphosphate + H(+). Functionally, catalyzes the attachment of tryptophan to tRNA(Trp). This chain is Tryptophan--tRNA ligase, found in Caulobacter vibrioides (strain ATCC 19089 / CIP 103742 / CB 15) (Caulobacter crescentus).